Consider the following 455-residue polypeptide: L-serine dehydratase (455 aa).

It belongs to the iron-sulfur dependent L-serine dehydratase family. [4Fe-4S] cluster serves as cofactor.

The catalysed reaction is L-serine = pyruvate + NH4(+). It participates in carbohydrate biosynthesis; gluconeogenesis. The protein is L-serine dehydratase (sdaA) of Streptomyces coelicolor (strain ATCC BAA-471 / A3(2) / M145).